Consider the following 436-residue polypeptide: Envelope glycoprotein (436 aa).

A signal peptide is located at residue M1. Residues A2–A436 are Extracellular-facing. N11 and N26 each carry an N-linked (GlcNAc...) asparagine; by host glycan. 2 cysteine pairs are disulfide-bonded: C95–C117 and C109–C122. Residues P203–G255 form a disordered region. Over residues P219–A240 the composition is skewed to polar residues. Residues N237, N272, and N277 are each glycosylated (N-linked (GlcNAc...) asparagine; by host). Positions C282–C285 match the CXXC motif. N-linked (GlcNAc...) asparagine; by host glycans are attached at residues N304, N344, N360, and N380.

In terms of assembly, the mature envelope protein (Env) consists of a trimer of SU-TM heterodimers attached by a labile interchain disulfide bond. In terms of processing, specific enzymatic cleavages in vivo yield mature proteins. Envelope glycoproteins are synthesized as an inactive precursor that is N-glycosylated and processed likely by host cell furin or by a furin-like protease in the Golgi to yield the mature SU and TM proteins. The cleavage site between SU and TM requires the minimal sequence [KR]-X-[KR]-R.

It is found in the virion membrane. The protein resides in the host cell membrane. In terms of biological role, the surface protein (SU) attaches the virus to the host cell by binding to its receptor. This interaction triggers the refolding of the transmembrane protein (TM) and is thought to activate its fusogenic potential by unmasking its fusion peptide. Fusion occurs at the host cell plasma membrane. The transmembrane protein (TM) acts as a class I viral fusion protein. Under the current model, the protein has at least 3 conformational states: pre-fusion native state, pre-hairpin intermediate state, and post-fusion hairpin state. During viral and target cell membrane fusion, the coiled coil regions (heptad repeats) assume a trimer-of-hairpins structure, positioning the fusion peptide in close proximity to the C-terminal region of the ectodomain. The formation of this structure appears to drive apposition and subsequent fusion of viral and target cell membranes. Membranes fusion leads to delivery of the nucleocapsid into the cytoplasm. This Feline leukemia virus (strain C/FS246) protein is Envelope glycoprotein.